The chain runs to 320 residues: Cytochrome f (320 aa).

Positions 1–35 are cleaved as a signal peptide; that stretch reads MQTRNAFSWLKKQITRSISVSLMIYILTRTSISSA. Heme contacts are provided by tyrosine 36, cysteine 56, cysteine 59, and histidine 60. The helical transmembrane segment at 286–306 threads the bilayer; sequence VQGLLFFLASVILAQIFLVLK.

This sequence belongs to the cytochrome f family. The 4 large subunits of the cytochrome b6-f complex are cytochrome b6, subunit IV (17 kDa polypeptide, petD), cytochrome f and the Rieske protein, while the 4 small subunits are PetG, PetL, PetM and PetN. The complex functions as a dimer. Requires heme as cofactor.

The protein resides in the plastid. The protein localises to the chloroplast thylakoid membrane. In terms of biological role, component of the cytochrome b6-f complex, which mediates electron transfer between photosystem II (PSII) and photosystem I (PSI), cyclic electron flow around PSI, and state transitions. This chain is Cytochrome f, found in Nicotiana sylvestris (Wood tobacco).